Consider the following 86-residue polypeptide: Muscarinic toxin-like protein (86 aa).

An N-terminal signal peptide occupies residues 1-21 (MKTLLLTLAVVTMVCMDLGYT). Intrachain disulfides connect Cys-24–Cys-45, Cys-38–Cys-62, Cys-66–Cys-78, and Cys-79–Cys-84.

It belongs to the three-finger toxin family. Short-chain subfamily. Orphan group VIII (haditoxin) sub-subfamily. Homodimer; non-covalently linked. Expressed by the venom gland.

It localises to the secreted. Antagonist of muscle and neuronal nicotinic acetylcholine receptors (nAChR) with highest affinity for neuronal alpha-7/CHRNA7 nAChRs. This chain is Muscarinic toxin-like protein, found in Bungarus multicinctus (Many-banded krait).